Here is a 149-residue protein sequence, read N- to C-terminus: Calmodulin (149 aa).

4 EF-hand domains span residues 8 to 43 (EQIS…LGQN), 44 to 79 (PTEA…KMQD), 81 to 116 (DSEE…LGEK), and 117 to 149 (LTDE…MMSK). Asp21, Asp23, Asp25, Thr27, Glu32, Asp57, Asp59, Ser61, Thr63, Glu68, Asp94, Asp96, Asn98, and Glu105 together coordinate Ca(2+). N6,N6,N6-trimethyllysine is present on Lys116. The Ca(2+) site is built by Asp130, Asp132, Asp134, Gln136, and Glu141.

It belongs to the calmodulin family.

In terms of biological role, calmodulin mediates the control of a large number of enzymes, ion channels and other proteins by Ca(2+). Among the enzymes to be stimulated by the calmodulin-Ca(2+) complex are a number of protein kinases and phosphatases. The chain is Calmodulin from Trypanosoma brucei brucei.